Consider the following 711-residue polypeptide: Protein ACTIVITY OF BC1 COMPLEX KINASE 3, chloroplastic (711 aa).

The transit peptide at 1-42 (MSLVVGQSLGLTLVGDGLSLRNSKINVGKSKFFSVNRRRLAR) directs the protein to the chloroplast. The region spanning 216-546 (SVSPEPIAAA…IELLFKDGKF (331 aa)) is the Protein kinase domain. Residues 222–230 (IAAASLGQV) and Lys245 contribute to the ATP site. Asp379 functions as the Proton acceptor in the catalytic mechanism.

This sequence belongs to the protein kinase superfamily. ADCK protein kinase family. Interacts with ABC1K1 in plastoglobules (PG). Interacts with PGM48.

It localises to the plastid. The protein localises to the chloroplast. The protein resides in the plastoglobule. The enzyme catalyses L-seryl-[protein] + ATP = O-phospho-L-seryl-[protein] + ADP + H(+). The catalysed reaction is L-threonyl-[protein] + ATP = O-phospho-L-threonyl-[protein] + ADP + H(+). Functionally, kinase that can phosphorylate the tocopherol cyclase VTE1, a key enzyme of tocopherol (vitamin E) metabolism and involved in the recycling of oxidated alpha-tocopherol quinone, possibly stabilizing it at plastoglobules. Also regulates membrane prenylquinone composition. Required for photooxidative stress responses to prevent photosystem II core and chlorophyll degradations. Together with ABC1K1, contributes to plastoglobule (PG) function in prenyl-lipid metabolism, stress response, and thylakoid remodeling. Promotes photodamage of chloroplasts under continuous red light, thus working in opposition to ABC1K1. The polypeptide is Protein ACTIVITY OF BC1 COMPLEX KINASE 3, chloroplastic (Arabidopsis thaliana (Mouse-ear cress)).